We begin with the raw amino-acid sequence, 139 residues long: Translation initiation factor 2 subunit beta (139 aa).

This sequence belongs to the eIF-2-beta/eIF-5 family. As to quaternary structure, heterotrimer composed of an alpha, a beta and a gamma chain.

Its function is as follows. eIF-2 functions in the early steps of protein synthesis by forming a ternary complex with GTP and initiator tRNA. In Methanococcus aeolicus (strain ATCC BAA-1280 / DSM 17508 / OCM 812 / Nankai-3), this protein is Translation initiation factor 2 subunit beta.